The sequence spans 420 residues: Glucose-1-phosphate adenylyltransferase (420 aa).

Alpha-D-glucose 1-phosphate-binding positions include Tyr-107, Gly-173, 188 to 189 (EK), and Ser-206.

The protein belongs to the bacterial/plant glucose-1-phosphate adenylyltransferase family. Homotetramer.

The enzyme catalyses alpha-D-glucose 1-phosphate + ATP + H(+) = ADP-alpha-D-glucose + diphosphate. The protein operates within glycan biosynthesis; glycogen biosynthesis. Functionally, involved in the biosynthesis of ADP-glucose, a building block required for the elongation reactions to produce glycogen. Catalyzes the reaction between ATP and alpha-D-glucose 1-phosphate (G1P) to produce pyrophosphate and ADP-Glc. The sequence is that of Glucose-1-phosphate adenylyltransferase from Shewanella sp. (strain W3-18-1).